The sequence spans 217 residues: Protein GrpE (217 aa).

3 stretches are compositionally biased toward acidic residues: residues 1–28 (MSDD…EGDD), 136–152 (DILD…DPGT), and 204–217 (SEAE…DGDE). Disordered regions lie at residues 1-44 (MSDD…NDPA), 135-157 (DDIL…TDPK), and 193-217 (QVTV…DGDE).

The protein belongs to the GrpE family. In terms of assembly, homodimer.

It is found in the cytoplasm. Its function is as follows. Participates actively in the response to hyperosmotic and heat shock by preventing the aggregation of stress-denatured proteins, in association with DnaK and GrpE. It is the nucleotide exchange factor for DnaK and may function as a thermosensor. Unfolded proteins bind initially to DnaJ; upon interaction with the DnaJ-bound protein, DnaK hydrolyzes its bound ATP, resulting in the formation of a stable complex. GrpE releases ADP from DnaK; ATP binding to DnaK triggers the release of the substrate protein, thus completing the reaction cycle. Several rounds of ATP-dependent interactions between DnaJ, DnaK and GrpE are required for fully efficient folding. The protein is Protein GrpE of Natronomonas pharaonis (strain ATCC 35678 / DSM 2160 / CIP 103997 / JCM 8858 / NBRC 14720 / NCIMB 2260 / Gabara) (Halobacterium pharaonis).